We begin with the raw amino-acid sequence, 216 residues long: Ribosomal RNA small subunit methyltransferase G (216 aa).

S-adenosyl-L-methionine contacts are provided by residues Gly86, Leu91, Val137 to Glu138, and Arg155.

This sequence belongs to the methyltransferase superfamily. RNA methyltransferase RsmG family.

It localises to the cytoplasm. It carries out the reaction guanosine(527) in 16S rRNA + S-adenosyl-L-methionine = N(7)-methylguanosine(527) in 16S rRNA + S-adenosyl-L-homocysteine. Functionally, specifically methylates the N7 position of guanine in position 527 of 16S rRNA. In Lawsonia intracellularis (strain PHE/MN1-00), this protein is Ribosomal RNA small subunit methyltransferase G.